A 408-amino-acid polypeptide reads, in one-letter code: Dual-specificity RNA methyltransferase RlmN (408 aa).

Residue glutamate 120 is the Proton acceptor of the active site. The Radical SAM core domain occupies 126-375 (EEGRGTLCIS…IRTPRGRDIL (250 aa)). An intrachain disulfide couples cysteine 133 to cysteine 378. Cysteine 140, cysteine 144, and cysteine 147 together coordinate [4Fe-4S] cluster. S-adenosyl-L-methionine-binding positions include 204 to 205 (GE), serine 236, 258 to 260 (SLH), and asparagine 335. Catalysis depends on cysteine 378, which acts as the S-methylcysteine intermediate.

It belongs to the radical SAM superfamily. RlmN family. [4Fe-4S] cluster serves as cofactor.

It localises to the cytoplasm. It carries out the reaction adenosine(2503) in 23S rRNA + 2 reduced [2Fe-2S]-[ferredoxin] + 2 S-adenosyl-L-methionine = 2-methyladenosine(2503) in 23S rRNA + 5'-deoxyadenosine + L-methionine + 2 oxidized [2Fe-2S]-[ferredoxin] + S-adenosyl-L-homocysteine. It catalyses the reaction adenosine(37) in tRNA + 2 reduced [2Fe-2S]-[ferredoxin] + 2 S-adenosyl-L-methionine = 2-methyladenosine(37) in tRNA + 5'-deoxyadenosine + L-methionine + 2 oxidized [2Fe-2S]-[ferredoxin] + S-adenosyl-L-homocysteine. In terms of biological role, specifically methylates position 2 of adenine 2503 in 23S rRNA and position 2 of adenine 37 in tRNAs. m2A2503 modification seems to play a crucial role in the proofreading step occurring at the peptidyl transferase center and thus would serve to optimize ribosomal fidelity. The sequence is that of Dual-specificity RNA methyltransferase RlmN from Rhizobium leguminosarum bv. trifolii (strain WSM2304).